The following is a 175-amino-acid chain: B9 domain-containing protein 2 (175 aa).

Positions 2–118 (AEVHVIGQII…DCPTWRPLGS (117 aa)) constitute a C2 B9-type domain.

Belongs to the B9D family. In terms of assembly, part of the tectonic-like complex (also named B9 complex). Interacts with TUBG1. In terms of tissue distribution, highest expression in thymus and skeletal muscle. Also expressed in spleen, kidney, lung, heart, microglia and liver. Detected in brain (at protein level).

It localises to the cytoplasm. It is found in the cytoskeleton. The protein localises to the cilium basal body. Its subcellular location is the cilium axoneme. The protein resides in the nucleus. Its function is as follows. Component of the tectonic-like complex, a complex localized at the transition zone of primary cilia and acting as a barrier that prevents diffusion of transmembrane proteins between the cilia and plasma membranes. This chain is B9 domain-containing protein 2 (B9d2), found in Mus musculus (Mouse).